The chain runs to 314 residues: MQIQCFESITQKYPQFPTALLANEEPIQNGEPFILYGTKLDITKLEKFQQKCGQNFQIFDVWMVAKNIIVLLKGQWFSDFIKFTHDVEVDIAKLDFSPKLSQAGLLVMDMDSTAIQIECIDEIAKLAGVGELVSAITESAMRGELDFEQSLRCRVGTLKGAPESILQQVRENLPLMSGLVETIQTLQKYGWKTAIASGGFTYFADYLKALLQLDFAASNQFDIEDGKLTGLVKGDVVDAQYKAKTLQHLLEEYGIDSRHSIAIGDGANDLAMMNVAGLGVAFHAKPKVQPQAQIVVNFADLTALLCLLSANDRI.

Catalysis depends on Asp-109, which acts as the Nucleophile. Mg(2+) contacts are provided by Asp-109 and Asp-111. Asp-111 acts as the Proton donor in catalysis. Substrate-binding positions include Glu-118, Arg-154, 197–198 (SG), and Lys-242. Residue Asp-265 coordinates Mg(2+). Substrate is bound at residue Asn-268.

This sequence belongs to the HAD-like hydrolase superfamily. SerB family. Mg(2+) is required as a cofactor.

It carries out the reaction O-phospho-L-serine + H2O = L-serine + phosphate. It catalyses the reaction O-phospho-D-serine + H2O = D-serine + phosphate. It participates in amino-acid biosynthesis; L-serine biosynthesis; L-serine from 3-phospho-D-glycerate: step 3/3. Catalyzes the dephosphorylation of phosphoserine (P-Ser). This Haemophilus influenzae (strain ATCC 51907 / DSM 11121 / KW20 / Rd) protein is Phosphoserine phosphatase (serB).